Consider the following 186-residue polypeptide: Nicotinamidase/pyrazinamidase (186 aa).

Asp8 acts as the Proton acceptor in catalysis. Asp49, His51, His57, and His71 together coordinate Fe cation. The active site involves Lys96. Cys138 serves as the catalytic Nucleophile.

Belongs to the isochorismatase family. In terms of assembly, monomer. Mn(2+) is required as a cofactor. Requires Fe(2+) as cofactor.

It catalyses the reaction nicotinamide + H2O = nicotinate + NH4(+). The catalysed reaction is pyrazinamide + H2O = pyrazine-2-carboxylate + NH4(+). It participates in cofactor biosynthesis; nicotinate biosynthesis; nicotinate from nicotinamide: step 1/1. Is inhibited by Cu(2+), Zn(2+) and Fe(3+). Functionally, catalyzes the deamidation of nicotinamide (NAM) into nicotinate. Likely functions in the cyclical salvage pathway for production of NAD from nicotinamide. Its function is as follows. Is involved in the activation of the first-line antituberculous drug pyrazinamide (PZA) by converting it into the active form, pyrazinoic acid. The polypeptide is Nicotinamidase/pyrazinamidase (Mycobacterium tuberculosis (strain ATCC 25618 / H37Rv)).